The chain runs to 1084 residues: Ribonucleoside-diphosphate reductase NrdEB subunit alpha (1084 aa).

Substrate is bound by residues Thr152, 168-169, and Gly197; that span reads SC. A disulfide bond links Cys169 and Cys793. The Proton acceptor role is filled by Asn379. Catalysis depends on Cys381, which acts as the Cysteine radical intermediate. The 152-residue stretch at 503-654 folds into the DOD-type homing endonuclease domain; it reads IMGIIAGDGT…VQKLLLNMGV (152 aa). The Proton acceptor role is filled by Glu768. Residue 964-968 coordinates substrate; that stretch reads PTGSI.

Belongs to the ribonucleoside diphosphate reductase large chain family. Tetramer of two alpha and two beta subunits. This protein undergoes protein self-splicing that involves post-translational excision of the intervening region (intein) followed by peptide ligation.

The catalysed reaction is a 2'-deoxyribonucleoside 5'-diphosphate + [thioredoxin]-disulfide + H2O = a ribonucleoside 5'-diphosphate + [thioredoxin]-dithiol. Under complex allosteric control mediated by deoxynucleoside triphosphates and ATP binding. The type of nucleotide bound at the specificity site determines substrate preference. It seems probable that ATP makes the enzyme reduce CDP and UDP, dGTP favors ADP reduction and dTTP favors GDP reduction. Functionally, provides the precursors necessary for DNA synthesis. Catalyzes the biosynthesis of deoxyribonucleotides from the corresponding ribonucleotides. This is Ribonucleoside-diphosphate reductase NrdEB subunit alpha (nrdEB) from Bacillus subtilis (strain 168).